We begin with the raw amino-acid sequence, 194 residues long: UPF0301 protein BT_0659 (194 aa).

It belongs to the UPF0301 (AlgH) family.

This chain is UPF0301 protein BT_0659, found in Bartonella tribocorum (strain CIP 105476 / IBS 506).